A 206-amino-acid polypeptide reads, in one-letter code: Ribosomal RNA small subunit methyltransferase G (206 aa).

S-adenosyl-L-methionine-binding positions include Gly74, Leu79, 125-126 (VE), and Arg140.

Belongs to the methyltransferase superfamily. RNA methyltransferase RsmG family.

It is found in the cytoplasm. The catalysed reaction is guanosine(527) in 16S rRNA + S-adenosyl-L-methionine = N(7)-methylguanosine(527) in 16S rRNA + S-adenosyl-L-homocysteine. In terms of biological role, specifically methylates the N7 position of guanine in position 527 of 16S rRNA. The protein is Ribosomal RNA small subunit methyltransferase G of Shewanella amazonensis (strain ATCC BAA-1098 / SB2B).